The primary structure comprises 301 residues: Immediate early response gene 5-like protein (301 aa).

The protein belongs to the IER family.

The protein is Immediate early response gene 5-like protein (ier5l) of Danio rerio (Zebrafish).